Here is a 1195-residue protein sequence, read N- to C-terminus: Chromosome partition protein Smc (1195 aa).

Position 33–40 (33–40 (PNGSGKSN)) interacts with ATP. Coiled coils occupy residues 185 to 241 (GVAQ…RQEQ), 273 to 348 (DAAT…IQAL), and 380 to 528 (QYQQ…QETQ). The 117-residue stretch at 542-658 (PGVHGLVAQL…FERLDQARRY (117 aa)) folds into the SMC hinge domain. Positions 698 to 1043 (GESAEVRAIR…ELLLRIENFT (346 aa)) form a coiled coil.

This sequence belongs to the SMC family. In terms of assembly, homodimer.

Its subcellular location is the cytoplasm. Its function is as follows. Required for chromosome condensation and partitioning. In Synechococcus sp. (strain ATCC 27144 / PCC 6301 / SAUG 1402/1) (Anacystis nidulans), this protein is Chromosome partition protein Smc.